Reading from the N-terminus, the 137-residue chain is uncharacterized protein (137 aa).

The region spanning 4–73 (MLTVSEVARK…LEEIADILHL (70 aa)) is the HTH merR-type domain. A DNA-binding region (H-T-H motif) is located at residues 8–27 (SEVARKLGLNPQTLYFYERI).

This is an uncharacterized protein from Synechocystis sp. (strain ATCC 27184 / PCC 6803 / Kazusa).